The chain runs to 257 residues: NAD-dependent protein deacylase (257 aa).

Residues 1–252 (MLGHAAKLLA…LRRVKDIMAE (252 aa)) enclose the Deacetylase sirtuin-type domain. An NAD(+)-binding site is contributed by 20–39 (GAGISAESGIPTFRGRNGLW). Substrate contacts are provided by tyrosine 64 and arginine 67. Position 98-101 (98-101 (QNVD)) interacts with NAD(+). Histidine 116 serves as the catalytic Proton acceptor. Zn(2+)-binding residues include cysteine 124, cysteine 127, cysteine 151, and cysteine 154. NAD(+)-binding positions include 191 to 193 (GTS), 217 to 219 (NVE), and alanine 235.

This sequence belongs to the sirtuin family. Class III subfamily. Zn(2+) serves as cofactor.

The protein localises to the cytoplasm. It catalyses the reaction N(6)-acetyl-L-lysyl-[protein] + NAD(+) + H2O = 2''-O-acetyl-ADP-D-ribose + nicotinamide + L-lysyl-[protein]. The enzyme catalyses N(6)-succinyl-L-lysyl-[protein] + NAD(+) + H2O = 2''-O-succinyl-ADP-D-ribose + nicotinamide + L-lysyl-[protein]. NAD-dependent lysine deacetylase and desuccinylase that specifically removes acetyl and succinyl groups on target proteins. Modulates the activities of several proteins which are inactive in their acylated form. Deacetylates the N-terminal lysine residue of Alba, the major archaeal chromatin protein and that, in turn, increases Alba's DNA binding affinity, thereby repressing transcription. This is NAD-dependent protein deacylase from Thermococcus kodakarensis (strain ATCC BAA-918 / JCM 12380 / KOD1) (Pyrococcus kodakaraensis (strain KOD1)).